Consider the following 1547-residue polypeptide: Mediator of RNA polymerase II transcription subunit 12 (1547 aa).

Disordered regions lie at residues 1–63 (MTSR…RPHI) and 1356–1509 (PVIP…QQRD). Pro residues predominate over residues 1357-1369 (VIPPLEPPQPPNP). Polar residues predominate over residues 1379–1390 (YQSPQMTSNTAA). 2 stretches are compositionally biased toward low complexity: residues 1398 to 1413 (QQQQQSQTLQPSQQTQ) and 1446 to 1468 (LSPLQQMQHMQQLQGLAQQRASQ). 2 stretches are compositionally biased toward polar residues: residues 1469 to 1480 (PSPIHSQRPTSV) and 1499 to 1509 (AHTSYVNQQRD).

Belongs to the Mediator complex subunit 12 family. As to quaternary structure, component of the SRB8-11 complex, which itself associates with the Mediator complex.

The protein resides in the nucleus. Functionally, component of the SRB8-11 complex. The SRB8-11 complex is a regulatory module of the Mediator complex which is itself involved in regulation of basal and activated RNA polymerase II-dependent transcription. The SRB8-11 complex may be involved in the transcriptional repression of a subset of genes regulated by Mediator. It may inhibit the association of the Mediator complex with RNA polymerase II to form the holoenzyme complex. The polypeptide is Mediator of RNA polymerase II transcription subunit 12 (SRB8) (Phaeosphaeria nodorum (strain SN15 / ATCC MYA-4574 / FGSC 10173) (Glume blotch fungus)).